Reading from the N-terminus, the 437-residue chain is Adenylosuccinate lyase (437 aa).

Residues 4 to 5 (RY), 70 to 72 (KHD), and 96 to 97 (TS) contribute to the N(6)-(1,2-dicarboxyethyl)-AMP site. Residue histidine 144 is the Proton donor/acceptor of the active site. Glutamine 215 contributes to the N(6)-(1,2-dicarboxyethyl)-AMP binding site. The Proton donor/acceptor role is filled by serine 265. N(6)-(1,2-dicarboxyethyl)-AMP-binding positions include serine 266, 271-273 (KKN), and 310-314 (SVERV).

It belongs to the lyase 1 family. Adenylosuccinate lyase subfamily. In terms of assembly, homooligomer. Residues from neighboring subunits contribute catalytic and substrate-binding residues to each active site.

It catalyses the reaction N(6)-(1,2-dicarboxyethyl)-AMP = fumarate + AMP. It carries out the reaction (2S)-2-[5-amino-1-(5-phospho-beta-D-ribosyl)imidazole-4-carboxamido]succinate = 5-amino-1-(5-phospho-beta-D-ribosyl)imidazole-4-carboxamide + fumarate. It participates in purine metabolism; AMP biosynthesis via de novo pathway; AMP from IMP: step 2/2. The protein operates within purine metabolism; IMP biosynthesis via de novo pathway; 5-amino-1-(5-phospho-D-ribosyl)imidazole-4-carboxamide from 5-amino-1-(5-phospho-D-ribosyl)imidazole-4-carboxylate: step 2/2. Catalyzes two reactions in de novo purine nucleotide biosynthesis. Catalyzes the breakdown of 5-aminoimidazole- (N-succinylocarboxamide) ribotide (SAICAR or 2-[5-amino-1-(5-phospho-beta-D-ribosyl)imidazole-4-carboxamido]succinate) to 5-aminoimidazole-4-carboxamide ribotide (AICAR or 5-amino-1-(5-phospho-beta-D-ribosyl)imidazole-4-carboxamide) and fumarate, and of adenylosuccinate (ADS or N(6)-(1,2-dicarboxyethyl)-AMP) to adenosine monophosphate (AMP) and fumarate. In Aquifex aeolicus (strain VF5), this protein is Adenylosuccinate lyase (purB).